The sequence spans 449 residues: Transport protein ComB (449 aa).

The Cytoplasmic portion of the chain corresponds to methionine 1–serine 20. Residues serine 21 to alanine 41 form a helical membrane-spanning segment. Over glutamate 42–glutamate 449 the chain is Extracellular.

The protein belongs to the membrane fusion protein (MFP) (TC 8.A.1) family.

It localises to the cell membrane. Its function is as follows. Required for induction of competence. In Streptococcus pneumoniae (strain ATCC BAA-255 / R6), this protein is Transport protein ComB (comB).